We begin with the raw amino-acid sequence, 836 residues long: RNA-binding protein 12B-A (836 aa).

The RRM 1 domain occupies 154-229; sequence PYLFLRGLPY…RFIEVMQGSE (76 aa). Positions 237 to 277 are disordered; sequence GTATEGGDTPRMRSEEHSPSRRINGRHFRKRSHSKSPRARS. A compositionally biased stretch (basic and acidic residues) spans 244–255; it reads DTPRMRSEEHSP. The segment covering 259 to 277 has biased composition (basic residues); sequence INGRHFRKRSHSKSPRARS. RRM domains are found at residues 283 to 359 and 401 to 478; these read FYVH…PVSR and LCIY…LISE. Disordered regions lie at residues 539–572 and 620–644; these read GHFK…PWEE and SQEH…RRSR. Over residues 550-572 the composition is skewed to basic and acidic residues; that stretch reads QSDRRSPEDFRHSPEDYRHPWEE. A Phosphoserine modification is found at Ser703. Lys758 carries the N6-acetyllysine modification. One can recognise an RRM 4 domain in the interval 760–836; it reads IPVKISNLPF…GPRKVKLSLL (77 aa).

This chain is RNA-binding protein 12B-A (Rbm12b1), found in Mus musculus (Mouse).